A 100-amino-acid polypeptide reads, in one-letter code: NADH-quinone oxidoreductase subunit K (100 aa).

A run of 3 helical transmembrane segments spans residues 4–24 (LSWY…GFVI), 29–49 (IVML…FASF), and 60–80 (IFVL…LAIV).

The protein belongs to the complex I subunit 4L family. As to quaternary structure, NDH-1 is composed of 14 different subunits. Subunits NuoA, H, J, K, L, M, N constitute the membrane sector of the complex.

The protein resides in the cell inner membrane. It catalyses the reaction a quinone + NADH + 5 H(+)(in) = a quinol + NAD(+) + 4 H(+)(out). In terms of biological role, NDH-1 shuttles electrons from NADH, via FMN and iron-sulfur (Fe-S) centers, to quinones in the respiratory chain. The immediate electron acceptor for the enzyme in this species is believed to be ubiquinone. Couples the redox reaction to proton translocation (for every two electrons transferred, four hydrogen ions are translocated across the cytoplasmic membrane), and thus conserves the redox energy in a proton gradient. The sequence is that of NADH-quinone oxidoreductase subunit K from Thermodesulfovibrio yellowstonii (strain ATCC 51303 / DSM 11347 / YP87).